A 28-amino-acid polypeptide reads, in one-letter code: Short cationic peptide-1b (28 aa).

At E28 the chain carries Glutamic acid 1-amide.

Expressed by the venom gland.

It is found in the secreted. This Cupiennius salei (American wandering spider) protein is Short cationic peptide-1b.